The following is a 335-amino-acid chain: DNA polymerase beta (335 aa).

Residue Lys41 forms a Glycyl lysine isopeptide (Lys-Gly) (interchain with G-Cter in ubiquitin) linkage. Position 60 (Lys60) interacts with K(+). Residue Lys60 coordinates Na(+). A Glycyl lysine isopeptide (Lys-Gly) (interchain with G-Cter in ubiquitin) cross-link involves residue Lys61. Positions 62 and 65 each coordinate K(+). Residues Leu62 and Val65 each contribute to the Na(+) site. The active-site Nucleophile; Schiff-base intermediate with DNA; for 5'-dRP lyase activity is Lys72. Lys72 is subject to N6-acetyllysine. Lys81 participates in a covalent cross-link: Glycyl lysine isopeptide (Lys-Gly) (interchain with G-Cter in ubiquitin). Arg83 carries the omega-N-methylarginine; by PRMT6 modification. Residues Thr101, Val103, and Ile106 each contribute to the K(+) site. Thr101, Val103, and Ile106 together coordinate Na(+). An a 2'-deoxyribonucleoside 5'-triphosphate-binding site is contributed by Arg149. Arg152 is modified (omega-N-methylarginine; by PRMT6). Ser180, Arg183, Gly189, and Asp190 together coordinate a 2'-deoxyribonucleoside 5'-triphosphate. Residues 183–192 are DNA-binding; the sequence is RGAESSGDMD. Residues Asp190, Asp192, and Asp256 each coordinate Mg(2+).

Belongs to the DNA polymerase type-X family. In terms of assembly, monomer. Binds single-stranded DNA (ssDNA). Interacts with APEX1, LIG1, LIG3, FEN1, PCNA and XRCC1. Interacts with HUWE1/ARF-BP1, STUB1/CHIP and USP47. Interacts with FAM168A. Requires Mg(2+) as cofactor. Methylation by PRMT6 stimulates the polymerase activity by enhancing DNA binding and processivity. In terms of processing, ubiquitinated at Lys-41, Lys-61 and Lys-81: monoubiquitinated by HUWE1/ARF-BP1. Monoubiquitinated protein is then the target of STUB1/CHIP, which catalyzes polyubiquitination from monoubiquitin, leading to degradation by the proteasome. USP47 mediates the deubiquitination of monoubiquitinated protein, preventing polyubiquitination by STUB1/CHIP and its subsequent degradation.

Its subcellular location is the nucleus. It is found in the cytoplasm. The catalysed reaction is DNA(n) + a 2'-deoxyribonucleoside 5'-triphosphate = DNA(n+1) + diphosphate. It catalyses the reaction a 5'-end 2'-deoxyribose-2'-deoxyribonucleotide-DNA = (2E,4S)-4-hydroxypenten-2-al-5-phosphate + a 5'-end 5'-phospho-2'-deoxyribonucleoside-DNA + H(+). The enzyme catalyses 2'-deoxyribonucleotide-(2'-deoxyribose 5'-phosphate)-2'-deoxyribonucleotide-DNA = a 3'-end 2'-deoxyribonucleotide-(2,3-dehydro-2,3-deoxyribose 5'-phosphate)-DNA + a 5'-end 5'-phospho-2'-deoxyribonucleoside-DNA + H(+). Functionally, repair polymerase that plays a key role in base-excision repair. During this process, the damaged base is excised by specific DNA glycosylases, the DNA backbone is nicked at the abasic site by an apurinic/apyrimidic (AP) endonuclease, and POLB removes 5'-deoxyribose-phosphate from the preincised AP site acting as a 5'-deoxyribose-phosphate lyase (5'-dRP lyase); through its DNA polymerase activity, it adds one nucleotide to the 3' end of the arising single-nucleotide gap. Conducts 'gap-filling' DNA synthesis in a stepwise distributive fashion rather than in a processive fashion as for other DNA polymerases. It is also able to cleave sugar-phosphate bonds 3' to an intact AP site, acting as an AP lyase. The sequence is that of DNA polymerase beta (POLB) from Bos taurus (Bovine).